Here is a 230-residue protein sequence, read N- to C-terminus: MAKKGKKYQEAASKVDRTQHYSVEEAIKLAKETSIANFDASVEVAFRLGIDTRKNDQQIRGAVVLPNGTGKSQSVLVFAKGDKIAEAEAAGADYVGEAEYVQKIQQGWFDFDVVVATPDMMGEVGKLGRVLGPKGLMPNPKTGTVTMDVKKAVEEIKAGKVEYRAEKAGIVHASIGKVSFTDEQLIENFNTLQDVLAKAKPSSAKGTYFKSVAVTTTMGPGVKIDTASFK.

It belongs to the universal ribosomal protein uL1 family. In terms of assembly, part of the 50S ribosomal subunit.

Binds directly to 23S rRNA. The L1 stalk is quite mobile in the ribosome, and is involved in E site tRNA release. In terms of biological role, protein L1 is also a translational repressor protein, it controls the translation of the L11 operon by binding to its mRNA. The polypeptide is Large ribosomal subunit protein uL1 (Staphylococcus aureus (strain Mu3 / ATCC 700698)).